The primary structure comprises 466 residues: Glutamate--tRNA ligase (466 aa).

The 'HIGH' region signature appears at 11–21; the sequence is PSPTGFIHLGN. Residues 243–247 carry the 'KMSKS' region motif; sequence KMSKR. Lysine 246 provides a ligand contact to ATP.

The protein belongs to the class-I aminoacyl-tRNA synthetase family. Glutamate--tRNA ligase type 1 subfamily. As to quaternary structure, monomer.

Its subcellular location is the cytoplasm. It carries out the reaction tRNA(Glu) + L-glutamate + ATP = L-glutamyl-tRNA(Glu) + AMP + diphosphate. Functionally, catalyzes the attachment of glutamate to tRNA(Glu) in a two-step reaction: glutamate is first activated by ATP to form Glu-AMP and then transferred to the acceptor end of tRNA(Glu). The sequence is that of Glutamate--tRNA ligase from Cupriavidus taiwanensis (strain DSM 17343 / BCRC 17206 / CCUG 44338 / CIP 107171 / LMG 19424 / R1) (Ralstonia taiwanensis (strain LMG 19424)).